We begin with the raw amino-acid sequence, 1008 residues long: Pheromone-regulated membrane protein 10 (1008 aa).

3 disordered regions span residues 1 to 273, 342 to 384, and 477 to 506; these read MSQS…TFLG, KLPE…FYTP, and KNDF…TQDE. Low complexity predominate over residues 70–85; that stretch reads DTIISNASTTNNSSSD. The span at 95–111 shows a compositional bias: polar residues; it reads GENSNLPNFNFSANQVH. Acidic residues-rich tracts occupy residues 116 to 132 and 143 to 161; these read ANED…EDTF and GSDE…EDKE. Over residues 162 to 186 the composition is skewed to basic and acidic residues; sequence EVVNEKEEIADDLHSKSSKTSRESK. Residues 188–204 are compositionally biased toward polar residues; the sequence is FNAGTKNSRRSLNSLQR. Over residues 205–214 the composition is skewed to basic and acidic residues; sequence NETDVTDQLK. The segment covering 215–225 has biased composition (low complexity); that stretch reads RTTSTTSSSKR. Over residues 226–239 the composition is skewed to basic and acidic residues; it reads SNSDKRTGFKDILR. Residues 346–364 are compositionally biased toward polar residues; sequence GTSSDQQLDYSDTSASNLI. A compositionally biased stretch (basic residues) spans 483 to 498; it reads GPKRMANKIPGRKHGA. The next 10 helical transmembrane spans lie at 683 to 703, 707 to 727, 736 to 756, 762 to 782, 800 to 820, 838 to 858, 866 to 886, 892 to 912, 917 to 937, and 978 to 998; these read SPWL…PFAF, WYDV…QFFV, SVFE…IGSI, FCFS…YIIL, MFYA…GASL, IKQD…LGLI, LPIM…AGKH, VTEF…NLYS, GMAV…GIAS, and VKVS…VYPF.

The protein belongs to the ThrE exporter (TC 2.A.79) family.

It localises to the membrane. The sequence is that of Pheromone-regulated membrane protein 10 from Debaryomyces hansenii (strain ATCC 36239 / CBS 767 / BCRC 21394 / JCM 1990 / NBRC 0083 / IGC 2968) (Yeast).